The chain runs to 169 residues: NAD(P)H-quinone oxidoreductase subunit 6, chloroplastic (169 aa).

5 helical membrane passes run 7 to 27 (FSSA…IFLP), 29 to 49 (IVYA…IYVL), 58 to 78 (AQVL…IMLV), 90 to 110 (SPPL…VQMI), and 139 to 159 (LLAF…AIVL).

This sequence belongs to the complex I subunit 6 family. NDH is composed of at least 16 different subunits, 5 of which are encoded in the nucleus.

The protein resides in the plastid. Its subcellular location is the chloroplast thylakoid membrane. It carries out the reaction a plastoquinone + NADH + (n+1) H(+)(in) = a plastoquinol + NAD(+) + n H(+)(out). The catalysed reaction is a plastoquinone + NADPH + (n+1) H(+)(in) = a plastoquinol + NADP(+) + n H(+)(out). Functionally, NDH shuttles electrons from NAD(P)H:plastoquinone, via FMN and iron-sulfur (Fe-S) centers, to quinones in the photosynthetic chain and possibly in a chloroplast respiratory chain. The immediate electron acceptor for the enzyme in this species is believed to be plastoquinone. Couples the redox reaction to proton translocation, and thus conserves the redox energy in a proton gradient. The polypeptide is NAD(P)H-quinone oxidoreductase subunit 6, chloroplastic (ndhG) (Nephroselmis olivacea (Green alga)).